Here is a 76-residue protein sequence, read N- to C-terminus: Exodeoxyribonuclease 7 small subunit (76 aa).

Belongs to the XseB family. Heterooligomer composed of large and small subunits.

The protein resides in the cytoplasm. The catalysed reaction is Exonucleolytic cleavage in either 5'- to 3'- or 3'- to 5'-direction to yield nucleoside 5'-phosphates.. Functionally, bidirectionally degrades single-stranded DNA into large acid-insoluble oligonucleotides, which are then degraded further into small acid-soluble oligonucleotides. The sequence is that of Exodeoxyribonuclease 7 small subunit from Bacillus mycoides (strain KBAB4) (Bacillus weihenstephanensis).